A 158-amino-acid chain; its full sequence is Small ribosomal subunit protein uS7 (158 aa).

Belongs to the universal ribosomal protein uS7 family. Part of the 30S ribosomal subunit. Contacts proteins S9 and S11.

Its function is as follows. One of the primary rRNA binding proteins, it binds directly to 16S rRNA where it nucleates assembly of the head domain of the 30S subunit. Is located at the subunit interface close to the decoding center, probably blocks exit of the E-site tRNA. The chain is Small ribosomal subunit protein uS7 from Christiangramia forsetii (strain DSM 17595 / CGMCC 1.15422 / KT0803) (Gramella forsetii).